The following is a 287-amino-acid chain: ATP synthase gamma chain (287 aa).

Belongs to the ATPase gamma chain family. In terms of assembly, F-type ATPases have 2 components, CF(1) - the catalytic core - and CF(0) - the membrane proton channel. CF(1) has five subunits: alpha(3), beta(3), gamma(1), delta(1), epsilon(1). CF(0) has three main subunits: a, b and c.

The protein resides in the cell inner membrane. Produces ATP from ADP in the presence of a proton gradient across the membrane. The gamma chain is believed to be important in regulating ATPase activity and the flow of protons through the CF(0) complex. The chain is ATP synthase gamma chain from Geobacter sp. (strain M21).